Here is a 330-residue protein sequence, read N- to C-terminus: Putative 4-hydroxythreonine-4-phosphate dehydrogenase (330 aa).

The a divalent metal cation site is built by H169, H213, and H263.

Belongs to the PdxA family. As to quaternary structure, homodimer. Zn(2+) is required as a cofactor. Requires Mg(2+) as cofactor. It depends on Co(2+) as a cofactor.

The protein localises to the cytoplasm. The enzyme catalyses 4-(phosphooxy)-L-threonine + NAD(+) = 3-amino-2-oxopropyl phosphate + CO2 + NADH. The protein operates within cofactor biosynthesis; pyridoxine 5'-phosphate biosynthesis; pyridoxine 5'-phosphate from D-erythrose 4-phosphate: step 4/5. In terms of biological role, catalyzes the NAD(P)-dependent oxidation of 4-(phosphooxy)-L-threonine (HTP) into 2-amino-3-oxo-4-(phosphooxy)butyric acid which spontaneously decarboxylates to form 3-amino-2-oxopropyl phosphate (AHAP). The protein is Putative 4-hydroxythreonine-4-phosphate dehydrogenase of Novosphingobium aromaticivorans (Sphingomonas aromaticivorans).